The sequence spans 572 residues: Urease subunit alpha (572 aa).

Residues 136–572 form the Urease domain; that stretch reads GGIDTHIHFI…VPLGQRYFLF (437 aa). Ni(2+)-binding residues include His-141, His-143, and Lys-224. Residue Lys-224 is modified to N6-carboxylysine. Residue His-226 participates in substrate binding. Residues His-253 and His-279 each coordinate Ni(2+). Residue His-327 is the Proton donor of the active site. Residue Asp-367 coordinates Ni(2+).

It belongs to the metallo-dependent hydrolases superfamily. Urease alpha subunit family. In terms of assembly, heterotrimer of UreA (gamma), UreB (beta) and UreC (alpha) subunits. Three heterotrimers associate to form the active enzyme. The cofactor is Ni cation. Post-translationally, carboxylation allows a single lysine to coordinate two nickel ions.

The protein localises to the cytoplasm. It catalyses the reaction urea + 2 H2O + H(+) = hydrogencarbonate + 2 NH4(+). It functions in the pathway nitrogen metabolism; urea degradation; CO(2) and NH(3) from urea (urease route): step 1/1. The chain is Urease subunit alpha from Haemophilus influenzae (strain PittGG).